The sequence spans 51 residues: Large ribosomal subunit protein eL40 (51 aa).

Residues cysteine 17, cysteine 20, cysteine 31, and cysteine 34 each contribute to the Zn(2+) site.

It belongs to the eukaryotic ribosomal protein eL40 family. In terms of assembly, part of the 50S ribosomal subunit. Zn(2+) is required as a cofactor.

The sequence is that of Large ribosomal subunit protein eL40 from Thermococcus kodakarensis (strain ATCC BAA-918 / JCM 12380 / KOD1) (Pyrococcus kodakaraensis (strain KOD1)).